We begin with the raw amino-acid sequence, 505 residues long: Glycerol kinase 2 (505 aa).

An ADP-binding site is contributed by Thr-17. ATP is bound by residues Thr-17, Thr-18, and Ser-19. Residue Thr-17 participates in sn-glycerol 3-phosphate binding. Arg-21 serves as a coordination point for ADP. Sn-glycerol 3-phosphate is bound by residues Arg-87, Glu-88, Tyr-139, and Asp-249. Positions 87, 88, 139, 249, and 250 each coordinate glycerol. ADP-binding residues include Thr-271 and Gly-314. Positions 271, 314, 318, and 415 each coordinate ATP. Positions 415 and 419 each coordinate ADP.

It belongs to the FGGY kinase family.

It catalyses the reaction glycerol + ATP = sn-glycerol 3-phosphate + ADP + H(+). It participates in polyol metabolism; glycerol degradation via glycerol kinase pathway; sn-glycerol 3-phosphate from glycerol: step 1/1. Inhibited by fructose 1,6-bisphosphate (FBP). In terms of biological role, key enzyme in the regulation of glycerol uptake and metabolism. Catalyzes the phosphorylation of glycerol to yield sn-glycerol 3-phosphate. The sequence is that of Glycerol kinase 2 from Pseudomonas aeruginosa (strain ATCC 15692 / DSM 22644 / CIP 104116 / JCM 14847 / LMG 12228 / 1C / PRS 101 / PAO1).